The sequence spans 345 residues: Phosphoribosylformylglycinamidine cyclo-ligase (345 aa).

Belongs to the AIR synthase family.

It localises to the cytoplasm. The enzyme catalyses 2-formamido-N(1)-(5-O-phospho-beta-D-ribosyl)acetamidine + ATP = 5-amino-1-(5-phospho-beta-D-ribosyl)imidazole + ADP + phosphate + H(+). It functions in the pathway purine metabolism; IMP biosynthesis via de novo pathway; 5-amino-1-(5-phospho-D-ribosyl)imidazole from N(2)-formyl-N(1)-(5-phospho-D-ribosyl)glycinamide: step 2/2. The protein is Phosphoribosylformylglycinamidine cyclo-ligase of Escherichia coli O127:H6 (strain E2348/69 / EPEC).